The sequence spans 313 residues: ADP-L-glycero-D-manno-heptose-6-epimerase (313 aa).

NADP(+) is bound by residues 10–11 (MI), 31–32 (DN), Lys38, Arg53, 75–79 (EGACS), and Asn92. The Proton acceptor role is filled by Tyr139. Lys143 lines the NADP(+) pocket. Asn174 contributes to the substrate binding site. 2 residues coordinate NADP(+): Val175 and Lys183. The active-site Proton acceptor is the Lys183. Residues Ser185, His192, 206–209 (FAGS), Arg214, and Tyr277 each bind substrate.

Belongs to the NAD(P)-dependent epimerase/dehydratase family. HldD subfamily. Homopentamer. NADP(+) is required as a cofactor.

The catalysed reaction is ADP-D-glycero-beta-D-manno-heptose = ADP-L-glycero-beta-D-manno-heptose. It participates in nucleotide-sugar biosynthesis; ADP-L-glycero-beta-D-manno-heptose biosynthesis; ADP-L-glycero-beta-D-manno-heptose from D-glycero-beta-D-manno-heptose 7-phosphate: step 4/4. Its pathway is bacterial outer membrane biogenesis; LPS core biosynthesis. In terms of biological role, catalyzes the interconversion between ADP-D-glycero-beta-D-manno-heptose and ADP-L-glycero-beta-D-manno-heptose via an epimerization at carbon 6 of the heptose. This Vibrio vulnificus (strain CMCP6) protein is ADP-L-glycero-D-manno-heptose-6-epimerase.